The chain runs to 281 residues: NADPH-dependent 7-cyano-7-deazaguanine reductase (281 aa).

88 to 90 (VES) provides a ligand contact to substrate. NADPH is bound at residue 90–91 (SK). The Thioimide intermediate role is filled by Cys189. Asp196 acts as the Proton donor in catalysis. 228 to 229 (HE) contacts substrate. 257-258 (RG) contacts NADPH.

Belongs to the GTP cyclohydrolase I family. QueF type 2 subfamily. In terms of assembly, homodimer.

It localises to the cytoplasm. The enzyme catalyses 7-aminomethyl-7-carbaguanine + 2 NADP(+) = 7-cyano-7-deazaguanine + 2 NADPH + 3 H(+). The protein operates within tRNA modification; tRNA-queuosine biosynthesis. In terms of biological role, catalyzes the NADPH-dependent reduction of 7-cyano-7-deazaguanine (preQ0) to 7-aminomethyl-7-deazaguanine (preQ1). This is NADPH-dependent 7-cyano-7-deazaguanine reductase from Klebsiella pneumoniae (strain 342).